The following is a 62-amino-acid chain: Sperm histone P2a (62 aa).

This sequence belongs to the protamine P2 family. In terms of processing, proteolytic processing into mature chains is required for histone eviction during spermatogenesis. Transition proteins (TNP1 and TNP2) are required for processing. Testis.

It is found in the nucleus. Its subcellular location is the chromosome. Its function is as follows. Protamines substitute for histones in the chromatin of sperm during the haploid phase of spermatogenesis. They compact sperm DNA into a highly condensed, stable and inactive complex. The chain is Sperm histone P2a from Equus caballus (Horse).